Reading from the N-terminus, the 262-residue chain is uncharacterized protein (262 aa).

6 helical membrane-spanning segments follow: residues 21 to 41 (ILITYFLCWAGFLFSFSVGKF), 94 to 114 (IVSNFMGCLIIMFALGALAYL), 139 to 159 (LLILFIFTVINPLTGLIGVNL), 164 to 184 (LIAVLPHGFFEFFGFATAVVV), 205 to 225 (IVILIACSFIFIFIAGMLEPI), and 240 to 260 (LLAAFATGYKNLFLYLISMLF).

The protein resides in the cell membrane. This is an uncharacterized protein from Methanocaldococcus jannaschii (strain ATCC 43067 / DSM 2661 / JAL-1 / JCM 10045 / NBRC 100440) (Methanococcus jannaschii).